Consider the following 370-residue polypeptide: NADH-quinone oxidoreductase subunit D (370 aa).

It belongs to the complex I 49 kDa subunit family. NDH-1 is composed of 14 different subunits. Subunits NuoB, C, D, E, F, and G constitute the peripheral sector of the complex.

It localises to the cell membrane. It catalyses the reaction a quinone + NADH + 5 H(+)(in) = a quinol + NAD(+) + 4 H(+)(out). Functionally, NDH-1 shuttles electrons from NADH, via FMN and iron-sulfur (Fe-S) centers, to quinones in the respiratory chain. The immediate electron acceptor for the enzyme in this species is believed to be a menaquinone. Couples the redox reaction to proton translocation (for every two electrons transferred, four hydrogen ions are translocated across the cytoplasmic membrane), and thus conserves the redox energy in a proton gradient. The polypeptide is NADH-quinone oxidoreductase subunit D (Clostridium beijerinckii (strain ATCC 51743 / NCIMB 8052) (Clostridium acetobutylicum)).